We begin with the raw amino-acid sequence, 384 residues long: G protein-coupled receptor 88 (384 aa).

At 1–35 (MTNSSSTSTSTTTGGSLLLLCEEEESWAGRRIPVS) the chain is on the extracellular side. Asn3 is a glycosylation site (N-linked (GlcNAc...) asparagine). A helical membrane pass occupies residues 36–56 (LLYSGLAIGGTLANGMVIYLV). Topologically, residues 57 to 73 (SSFRKLQTTSNAFIVNG) are cytoplasmic. Residues 74-94 (CAADLSVCALWMPQEAVLGLL) form a helical membrane-spanning segment. Over 95–116 (PSGSAEPPGDWDGGGGSYRLLR) the chain is Extracellular. The helical transmembrane segment at 117-136 (GGLLGLGLTVSLLSHCLVAL) threads the bilayer. The Cytoplasmic portion of the chain corresponds to 137 to 158 (NRYLLITRAPATYQVLYQRRHT). A helical membrane pass occupies residues 159-179 (VGMLALSWALALGLVLLLPPW). Over 180 to 195 (APKPGAEPPQVHYPAL) the chain is Extracellular. The chain crosses the membrane as a helical span at residues 196 to 216 (LAAGALLAQTALLLHCYLGIV). At 217–285 (RRVRVSVKRV…RAQRRLSGLS (69 aa)) the chain is on the cytoplasmic side. A helical transmembrane segment spans residues 286–306 (VLLLCCVFLLATQPLVWVSLA). Residues 307–310 (SGFS) are Extracellular-facing. Residues 311–331 (LPVPWGVQAASWLLCCALSAL) form a helical membrane-spanning segment. The Cytoplasmic segment spans residues 332–384 (NPLLYTWRNEEFRRSVRSVLPGVGDAAAAAAAATAVPAMSQAQLGTRAAGQHW).

Belongs to the G-protein coupled receptor 1 family. In terms of tissue distribution, expressed predominantly in the striatum.

The protein localises to the cell membrane. The protein resides in the cell projection. It is found in the cilium membrane. It localises to the cytoplasm. Its subcellular location is the nucleus. Orphan G protein-coupled receptor implicated in a large repertoire of behavioral responses that engage motor activities, spatial learning, and emotional processing. May play a role in the regulation of cognitive and motor function. Couples with the heterotrimeric G protein complex of the G(i) subfamily, consisting of GNAI1, GNB1 and GNG2, thereby acting through a G(i)-mediated pathway. Plays a role in the attenuation of D1 dopamine receptor (D1R)-mediated cAMP response in ciliated cells. In on-ciliated cells, involved in the inhibition of the beta-2 adrenergic receptor (B2AR) response. This Mus musculus (Mouse) protein is G protein-coupled receptor 88 (Gpr88).